The chain runs to 327 residues: Aspartate--ammonia ligase (327 aa).

It belongs to the class-II aminoacyl-tRNA synthetase family. AsnA subfamily.

It localises to the cytoplasm. The enzyme catalyses L-aspartate + NH4(+) + ATP = L-asparagine + AMP + diphosphate + H(+). Its pathway is amino-acid biosynthesis; L-asparagine biosynthesis; L-asparagine from L-aspartate (ammonia route): step 1/1. The polypeptide is Aspartate--ammonia ligase (Bacillus cereus (strain AH187)).